The primary structure comprises 61 residues: Beta-insect depressant toxin BotIT5 (61 aa).

Residues D1–G61 form the LCN-type CS-alpha/beta domain. Intrachain disulfides connect C10/C60, C14/C35, C21/C42, and C25/C44. G61 carries the glycine amide modification.

This sequence belongs to the long (4 C-C) scorpion toxin superfamily. Sodium channel inhibitor family. Beta subfamily. In terms of tissue distribution, expressed by the venom gland.

It is found in the secreted. In terms of biological role, depressant insect beta-toxins cause a transient contraction paralysis followed by a slow flaccid paralysis. They bind voltage-independently at site-4 of sodium channels (Nav) and shift the voltage of activation toward more negative potentials thereby affecting sodium channel activation and promoting spontaneous and repetitive firing. This toxin is active only on insects. The sequence is that of Beta-insect depressant toxin BotIT5 from Buthus occitanus tunetanus (Common European scorpion).